The primary structure comprises 423 residues: D-tagatose-1,6-bisphosphate aldolase subunit GatZ (423 aa).

Belongs to the GatZ/KbaZ family. GatZ subfamily. Forms a complex with GatY.

The protein operates within carbohydrate metabolism; D-tagatose 6-phosphate degradation; D-glyceraldehyde 3-phosphate and glycerone phosphate from D-tagatose 6-phosphate: step 2/2. Its function is as follows. Component of the tagatose-1,6-bisphosphate aldolase GatYZ that is required for full activity and stability of the Y subunit. Could have a chaperone-like function for the proper and stable folding of GatY. When expressed alone, GatZ does not show any aldolase activity. Is involved in the catabolism of galactitol. The chain is D-tagatose-1,6-bisphosphate aldolase subunit GatZ from Salmonella agona (strain SL483).